A 116-amino-acid chain; its full sequence is Large ribosomal subunit protein uL18 (116 aa).

It belongs to the universal ribosomal protein uL18 family. Part of the 50S ribosomal subunit; part of the 5S rRNA/L5/L18/L25 subcomplex. Contacts the 5S and 23S rRNAs.

Functionally, this is one of the proteins that bind and probably mediate the attachment of the 5S RNA into the large ribosomal subunit, where it forms part of the central protuberance. This chain is Large ribosomal subunit protein uL18, found in Hahella chejuensis (strain KCTC 2396).